The sequence spans 557 residues: Kelch repeat and BTB domain-containing protein 2 (557 aa).

In terms of domain architecture, BTB spans 26-95 (CDVIITIRDG…LYNRHISSMN (70 aa)). Residues 143–223 (IVKYIKRMLM…CIDIQNLDKK (81 aa)) form the BACK domain. 3 Kelch repeats span residues 305-352 (EIII…VIDD), 353-399 (TIYA…VLDQ), and 415-464 (SVHA…SHED).

Interacts (via BTB domain) with host CUL3.

It is found in the host cytoplasm. In terms of biological role, probable substrate-specific adapter of CUL3-containing E3 ubiquitin-protein ligases which mediate the ubiquitination and subsequent proteasomal degradation of host target proteins. In Cowpox virus (strain Brighton Red) (CPV), this protein is Kelch repeat and BTB domain-containing protein 2 (KBTB2).